The sequence spans 489 residues: Glycogen synthase (489 aa).

K17 contacts ADP-alpha-D-glucose.

Belongs to the glycosyltransferase 1 family. Bacterial/plant glycogen synthase subfamily.

It carries out the reaction [(1-&gt;4)-alpha-D-glucosyl](n) + ADP-alpha-D-glucose = [(1-&gt;4)-alpha-D-glucosyl](n+1) + ADP + H(+). It functions in the pathway glycan biosynthesis; glycogen biosynthesis. Functionally, synthesizes alpha-1,4-glucan chains using ADP-glucose. The chain is Glycogen synthase from Nitratidesulfovibrio vulgaris (strain ATCC 29579 / DSM 644 / CCUG 34227 / NCIMB 8303 / VKM B-1760 / Hildenborough) (Desulfovibrio vulgaris).